The sequence spans 236 residues: Leucyl/phenylalanyl-tRNA--protein transferase (236 aa).

Belongs to the L/F-transferase family.

It localises to the cytoplasm. The enzyme catalyses N-terminal L-lysyl-[protein] + L-leucyl-tRNA(Leu) = N-terminal L-leucyl-L-lysyl-[protein] + tRNA(Leu) + H(+). It carries out the reaction N-terminal L-arginyl-[protein] + L-leucyl-tRNA(Leu) = N-terminal L-leucyl-L-arginyl-[protein] + tRNA(Leu) + H(+). It catalyses the reaction L-phenylalanyl-tRNA(Phe) + an N-terminal L-alpha-aminoacyl-[protein] = an N-terminal L-phenylalanyl-L-alpha-aminoacyl-[protein] + tRNA(Phe). Functionally, functions in the N-end rule pathway of protein degradation where it conjugates Leu, Phe and, less efficiently, Met from aminoacyl-tRNAs to the N-termini of proteins containing an N-terminal arginine or lysine. The polypeptide is Leucyl/phenylalanyl-tRNA--protein transferase (Shewanella halifaxensis (strain HAW-EB4)).